The sequence spans 591 residues: MTLRPSRRAVLSAAAVLLTGCSEVPSQGPVKRADGPRAAAQESIDVAPHPPADGASIDLVVGGFLQAMASARDDYRVARSYLTSDIADRWDPHAKVTIYDATNHKPASTVATAALQAPVVGQIDSRGHYHPTSSQTLNHDFGMAQESGQWRISRPPEGVLISQYTFQRSWSTIPIYFLTEAADRLVPDVIHLPSAAADPDAALRAMTAGVPKPLDAVLRTALPDGVTVTGTTSVDAVGVVTVPLSASAAQLSPSQRRLLASQVTWTLNGFAAISRVRFTAGGSLLSLPEAAEDQTVSADLYAEFIPLPATHSPTVVAVIKGQMGRVAASGHNFQIMPGALGREATTNNSVAEVASTQLTMPMISPRSPGAVWHAVSADRRSLLTWQEGSEDIQVLATGVNLLRPQVLGDHSIMTFSDTDPTLIVIGSDGTRMSTVVDLGGRRVRSFSVAPDAVQVALVLERGKTRALGIGLLSRQEGAVHLSHIADIPLSSSDVNLSIITDVAWLSQTRLCVLGRAIDAGVTTPYEIAVDGSGATSMGQLTATSMAAVVALPKETGTEAVVLSEDGILLRHEDSFRWRQILQGVSAVAVTA.

The first 20 residues, 1 to 20 (MTLRPSRRAVLSAAAVLLTG), serve as a signal peptide directing secretion. Cys-21 is lipidated: N-palmitoyl cysteine. Cys-21 carries the S-diacylglycerol cysteine lipid modification.

It belongs to the LpqB lipoprotein family.

It is found in the cell membrane. In Cutibacterium acnes (strain DSM 16379 / KPA171202) (Propionibacterium acnes), this protein is Lipoprotein LpqB.